A 90-amino-acid chain; its full sequence is Progonadoliberin-3 (90 aa).

Residues Met-1–Ser-23 form the signal peptide. At Gln-24 the chain carries Pyrrolidone carboxylic acid. Gly-33 bears the Glycine amide mark.

This sequence belongs to the GnRH family.

The protein localises to the secreted. Stimulates the secretion of gonadotropins. This chain is Progonadoliberin-3 (gnrh3), found in Sparus aurata (Gilthead sea bream).